A 578-amino-acid polypeptide reads, in one-letter code: Glutamate--tRNA ligase (578 aa).

Residues 97–107 (PNPDFVIHLGN) carry the 'HIGH' region motif.

This sequence belongs to the class-I aminoacyl-tRNA synthetase family. Glutamate--tRNA ligase type 2 subfamily.

It localises to the cytoplasm. The catalysed reaction is tRNA(Glu) + L-glutamate + ATP = L-glutamyl-tRNA(Glu) + AMP + diphosphate. Its function is as follows. Catalyzes the attachment of glutamate to tRNA(Glu) in a two-step reaction: glutamate is first activated by ATP to form Glu-AMP and then transferred to the acceptor end of tRNA(Glu). This Hyperthermus butylicus (strain DSM 5456 / JCM 9403 / PLM1-5) protein is Glutamate--tRNA ligase.